The chain runs to 103 residues: Large ribosomal subunit protein bL21 (103 aa).

Belongs to the bacterial ribosomal protein bL21 family. Part of the 50S ribosomal subunit. Contacts protein L20.

In terms of biological role, this protein binds to 23S rRNA in the presence of protein L20. In Nitrosomonas europaea (strain ATCC 19718 / CIP 103999 / KCTC 2705 / NBRC 14298), this protein is Large ribosomal subunit protein bL21.